A 237-amino-acid polypeptide reads, in one-letter code: 2,3-bisphosphoglycerate-dependent phosphoglycerate mutase (237 aa).

Substrate is bound by residues 8–15, 21–22, arginine 60, 87–90, lysine 98, 114–115, and 180–181; these read RHGQSQWN, TG, ERHY, RR, and GN. The active-site Tele-phosphohistidine intermediate is histidine 9. The active-site Proton donor/acceptor is glutamate 87.

This sequence belongs to the phosphoglycerate mutase family. BPG-dependent PGAM subfamily. In terms of assembly, homodimer.

The catalysed reaction is (2R)-2-phosphoglycerate = (2R)-3-phosphoglycerate. The protein operates within carbohydrate degradation; glycolysis; pyruvate from D-glyceraldehyde 3-phosphate: step 3/5. Catalyzes the interconversion of 2-phosphoglycerate and 3-phosphoglycerate. This is 2,3-bisphosphoglycerate-dependent phosphoglycerate mutase from Caulobacter vibrioides (strain ATCC 19089 / CIP 103742 / CB 15) (Caulobacter crescentus).